The following is a 199-amino-acid chain: Chaperone protein TorD (199 aa).

The protein belongs to the TorD/DmsD family. TorD subfamily.

The protein resides in the cytoplasm. Involved in the biogenesis of TorA. Acts on TorA before the insertion of the molybdenum cofactor and, as a result, probably favors a conformation of the apoenzyme that is competent for acquiring the cofactor. The sequence is that of Chaperone protein TorD from Actinobacillus pleuropneumoniae serotype 7 (strain AP76).